A 208-amino-acid chain; its full sequence is Small ribosomal subunit protein uS4 (208 aa).

Positions 95 to 157 (RRIDNIVYRA…DSLKKLVRSN (63 aa)) constitute an S4 RNA-binding domain.

It belongs to the universal ribosomal protein uS4 family. Part of the 30S ribosomal subunit. Contacts protein S5. The interaction surface between S4 and S5 is involved in control of translational fidelity.

In terms of biological role, one of the primary rRNA binding proteins, it binds directly to 16S rRNA where it nucleates assembly of the body of the 30S subunit. With S5 and S12 plays an important role in translational accuracy. The polypeptide is Small ribosomal subunit protein uS4 (Borrelia duttonii (strain Ly)).